Consider the following 208-residue polypeptide: Probable GTP-binding protein EngB (208 aa).

Residues 23–205 (LTSEMVILGR…RQTLLKYLLT (183 aa)) enclose the EngB-type G domain. GTP-binding positions include 31-38 (GRSNVGKS), 57-61 (GKTRL), 84-87 (DLPG), 154-157 (TKFD), and 182-184 (FNA). Ser38 and Thr59 together coordinate Mg(2+).

It belongs to the TRAFAC class TrmE-Era-EngA-EngB-Septin-like GTPase superfamily. EngB GTPase family. Mg(2+) is required as a cofactor.

Necessary for normal cell division and for the maintenance of normal septation. The protein is Probable GTP-binding protein EngB of Helicobacter pylori (strain G27).